Consider the following 180-residue polypeptide: Acireductone dioxygenase (180 aa).

Fe(2+) contacts are provided by His97, His99, Glu103, and His141. Ni(2+) contacts are provided by His97, His99, Glu103, and His141.

This sequence belongs to the acireductone dioxygenase (ARD) family. As to quaternary structure, monomer. Fe(2+) is required as a cofactor. Ni(2+) serves as cofactor.

It catalyses the reaction 1,2-dihydroxy-5-(methylsulfanyl)pent-1-en-3-one + O2 = 3-(methylsulfanyl)propanoate + CO + formate + 2 H(+). The catalysed reaction is 1,2-dihydroxy-5-(methylsulfanyl)pent-1-en-3-one + O2 = 4-methylsulfanyl-2-oxobutanoate + formate + 2 H(+). It participates in amino-acid biosynthesis; L-methionine biosynthesis via salvage pathway; L-methionine from S-methyl-5-thio-alpha-D-ribose 1-phosphate: step 5/6. In terms of biological role, catalyzes 2 different reactions between oxygen and the acireductone 1,2-dihydroxy-3-keto-5-methylthiopentene (DHK-MTPene) depending upon the metal bound in the active site. Fe-containing acireductone dioxygenase (Fe-ARD) produces formate and 2-keto-4-methylthiobutyrate (KMTB), the alpha-ketoacid precursor of methionine in the methionine recycle pathway. Ni-containing acireductone dioxygenase (Ni-ARD) produces methylthiopropionate, carbon monoxide and formate, and does not lie on the methionine recycle pathway. In Yersinia pseudotuberculosis serotype O:3 (strain YPIII), this protein is Acireductone dioxygenase.